The following is an 85-amino-acid chain: U4-theraphotoxin-Hhn1m (85 aa).

The N-terminal stretch at 1–22 (MKVTLIAILTCAAVLVLHTTAA) is a signal peptide. The propeptide occupies 23 to 48 (EELEAESQLVEVGMPDTELAAVDEER). 3 disulfide bridges follow: C52–C66, C56–C77, and C71–C82.

This sequence belongs to the neurotoxin 12 (Hwtx-2) family. 02 (Hwtx-2) subfamily. Expressed by the venom gland.

Its subcellular location is the secreted. Its function is as follows. Postsynaptic neurotoxin. This is U4-theraphotoxin-Hhn1m from Cyriopagopus hainanus (Chinese bird spider).